The chain runs to 143 residues: MIIKTKYHGETQIQEDQTIVFKNGLPGFTGEKKFVILPLSEDSPFVVLQSVQSEELAFIVASPFVFFKDYGFDLDETTVELLEIESAEDVEVMAILTIEEPFEKSTANLMAPIVVNRRKMLAKQVILHDSSYLTKQPIGGEAC.

This sequence belongs to the FliW family. As to quaternary structure, interacts with translational regulator CsrA and flagellin(s).

It is found in the cytoplasm. In terms of biological role, acts as an anti-CsrA protein, binds CsrA and prevents it from repressing translation of its target genes, one of which is flagellin. Binds to flagellin and participates in the assembly of the flagellum. This is Flagellar assembly factor FliW from Bacillus licheniformis (strain ATCC 14580 / DSM 13 / JCM 2505 / CCUG 7422 / NBRC 12200 / NCIMB 9375 / NCTC 10341 / NRRL NRS-1264 / Gibson 46).